The sequence spans 738 residues: MNSMRISGHQSAVDARDHIEFAGGGRGPGNPGGGRGPGSPGGGRGPGSPGGGRGPGSPGGGRGPGSPGGGRGPGSPGGGRGPGSPGGGRGPGGGRGPSGGRGGDGRRREESPTDHEDGRINRSGRSTSTTTTRTSSTLARPTTVRAPVRPKGPIALPVTMTVREFSEATGVGAAEILKALLKAGVVANINQQIDYETAAVIAADFGIETVEYVPPQLEGIVENIRDVLAAQDPKDLKPRPPVVTIMGHVDHGKTKLLDAIRSTRVAESEAGGITQHIGAYQVELHGRKITFLDTPGHEAFTAMRARGAQVTDIVVLVVAADDGVMPQTLEAISHVKAAGVPMIVAINKIDAPNANPDRVRQQLANAGVIVEQFGGDVPSVEVSAKLKKNIDGLLEMILLVADLNEYKANPNAPAVGTIVEAEMDRTRGPVATVLVQNGTLRLEDNVLVGATTGTIRTMFNDAGKRLRFAEPATPVVILGLNDVPQAGDILQVMPDLTVAREIALQRQRKQRLEAMASTRGVSLDGLFSSIQQGKIKELNIILKADVQGSIGAIEHALSQLNTDEVQIRIIHRGTGTITESDVNLAIASHAIIIGFNARPDPAARRQAEQYGVDIRFYNIIYQLTEDIKKAMIGMLEPEYREVTEGFAEVRTTFRLPTREIVAGLYVTEGKITRQYNVRVLRNGVVIHDGKIASLKRFKDDVREVQAGYECGLIVEGFNDITPGDTMEFYRRERVERTV.

A compositionally biased stretch (polar residues) spans 1 to 10; that stretch reads MNSMRISGHQ. Residues 1–150 are disordered; the sequence is MNSMRISGHQ…PTTVRAPVRP (150 aa). The span at 22 to 102 shows a compositional bias: gly residues; it reads AGGGRGPGNP…GGRGPSGGRG (81 aa). Basic and acidic residues predominate over residues 103–120; sequence GDGRRREESPTDHEDGRI. Over residues 121-143 the composition is skewed to low complexity; that stretch reads NRSGRSTSTTTTRTSSTLARPTT. In terms of domain architecture, tr-type G spans 238–405; the sequence is PRPPVVTIMG…MILLVADLNE (168 aa). The segment at 247 to 254 is G1; that stretch reads GHVDHGKT. 247-254 is a GTP binding site; the sequence is GHVDHGKT. Residues 272–276 are G2; sequence GITQH. A G3 region spans residues 293–296; that stretch reads DTPG. Residues 293–297 and 347–350 contribute to the GTP site; these read DTPGH and NKID. Positions 347 to 350 are G4; that stretch reads NKID. Positions 383–385 are G5; that stretch reads SAK.

This sequence belongs to the TRAFAC class translation factor GTPase superfamily. Classic translation factor GTPase family. IF-2 subfamily.

The protein localises to the cytoplasm. One of the essential components for the initiation of protein synthesis. Protects formylmethionyl-tRNA from spontaneous hydrolysis and promotes its binding to the 30S ribosomal subunits. Also involved in the hydrolysis of GTP during the formation of the 70S ribosomal complex. The chain is Translation initiation factor IF-2 from Roseiflexus castenholzii (strain DSM 13941 / HLO8).